Here is a 376-residue protein sequence, read N- to C-terminus: Putative phosphoserine aminotransferase (376 aa).

Positions 1-30 (MADQLTPSLDIPAALKPRDGRFGSGPSKVR) are disordered. Arginine 50 is a binding site for L-glutamate. Residues 84–85 (AT), phenylalanine 108, threonine 154, aspartate 176, and glutamine 199 contribute to the pyridoxal 5'-phosphate site. An N6-(pyridoxal phosphate)lysine modification is found at lysine 200. 251–252 (NT) contacts pyridoxal 5'-phosphate.

Belongs to the class-V pyridoxal-phosphate-dependent aminotransferase family. SerC subfamily. Homodimer. Requires pyridoxal 5'-phosphate as cofactor.

Its subcellular location is the cytoplasm. It carries out the reaction O-phospho-L-serine + 2-oxoglutarate = 3-phosphooxypyruvate + L-glutamate. It catalyses the reaction 4-(phosphooxy)-L-threonine + 2-oxoglutarate = (R)-3-hydroxy-2-oxo-4-phosphooxybutanoate + L-glutamate. It functions in the pathway amino-acid biosynthesis; L-serine biosynthesis; L-serine from 3-phospho-D-glycerate: step 2/3. The protein operates within cofactor biosynthesis; pyridoxine 5'-phosphate biosynthesis; pyridoxine 5'-phosphate from D-erythrose 4-phosphate: step 3/5. Functionally, catalyzes the reversible conversion of 3-phosphohydroxypyruvate to phosphoserine and of 3-hydroxy-2-oxo-4-phosphonooxybutanoate to phosphohydroxythreonine. In Mycobacterium leprae (strain TN), this protein is Putative phosphoserine aminotransferase.